Reading from the N-terminus, the 188-residue chain is Threonylcarbamoyl-AMP synthase (188 aa).

Residues 3 to 188 enclose the YrdC-like domain; it reads QLHPSDIKDI…RSGKILRNGQ (186 aa).

The protein belongs to the SUA5 family. TsaC subfamily.

Its subcellular location is the cytoplasm. It catalyses the reaction L-threonine + hydrogencarbonate + ATP = L-threonylcarbamoyladenylate + diphosphate + H2O. In terms of biological role, required for the formation of a threonylcarbamoyl group on adenosine at position 37 (t(6)A37) in tRNAs that read codons beginning with adenine. Catalyzes the conversion of L-threonine, HCO(3)(-)/CO(2) and ATP to give threonylcarbamoyl-AMP (TC-AMP) as the acyladenylate intermediate, with the release of diphosphate. This chain is Threonylcarbamoyl-AMP synthase, found in Shewanella putrefaciens (strain CN-32 / ATCC BAA-453).